Reading from the N-terminus, the 231-residue chain is Uridylate cyclase (231 aa).

Residues 46–178 form the Guanylate cyclase domain; sequence TVLYADLDGS…RAANYAAKLT (133 aa). Tyrosine 49 is an a ribonucleoside 5'-triphosphate binding site. Positions 51 and 95 each coordinate Mn(2+). Arginine 96 serves as a coordination point for a ribonucleoside 5'-triphosphate.

It belongs to the adenylyl cyclase class-4/guanylyl cyclase family. Pyrimidine cyclase subfamily. As to quaternary structure, homodimer. The cofactor is Mn(2+).

It localises to the cytoplasm. It carries out the reaction UTP = 3',5'-cyclic UMP + diphosphate. In terms of biological role, pycsar (pyrimidine cyclase system for antiphage resistance) provides immunity against bacteriophage. The pyrimidine cyclase (PycC) synthesizes cyclic nucleotides in response to infection; these serve as specific second messenger signals. The signal activates the adjacent effector, leading to bacterial cell death and abortive phage infection. A clade B Pycsar system. Its function is as follows. The pyrimidine cyclase gene of a two-gene Pycsar system, generates cyclic UMP (cUMP) from UTP probably in response to bacteriophage infection. Expression of this and adjacent effector XpPycTIR (AC P0DV29) confers resistance to bacteriophage T7. When cells expressing the Pycsar system are infected phage T7 at low multiplicity of infection (0.2 MOI) the culture survives, at 2.0 MOI bacteria enter growth arrest. The same cells enter growth arrest after exposure to 2.5 mM cUMP but not cCMP; the effector protein responds only to the cUMP produced by its cognate NTP cyclase. The chain is Uridylate cyclase from Xanthomonas perforans.